A 435-amino-acid chain; its full sequence is ATP-dependent protease ATPase subunit HslU (435 aa).

ATP-binding positions include I18, 60-65 (GVGKTE), D248, E313, and R385.

This sequence belongs to the ClpX chaperone family. HslU subfamily. In terms of assembly, a double ring-shaped homohexamer of HslV is capped on each side by a ring-shaped HslU homohexamer. The assembly of the HslU/HslV complex is dependent on binding of ATP.

It localises to the cytoplasm. ATPase subunit of a proteasome-like degradation complex; this subunit has chaperone activity. The binding of ATP and its subsequent hydrolysis by HslU are essential for unfolding of protein substrates subsequently hydrolyzed by HslV. HslU recognizes the N-terminal part of its protein substrates and unfolds these before they are guided to HslV for hydrolysis. The protein is ATP-dependent protease ATPase subunit HslU of Ruegeria pomeroyi (strain ATCC 700808 / DSM 15171 / DSS-3) (Silicibacter pomeroyi).